A 265-amino-acid polypeptide reads, in one-letter code: Protein synthesis inhibitor PD-S2 (265 aa).

2 disulfide bridges follow: Cys-34-Cys-262 and Cys-88-Cys-110. Residue Asn-120 is glycosylated (N-linked (GlcNAc...) asparagine).

The protein belongs to the ribosome-inactivating protein family. Type 1 RIP subfamily. Glycosylated. Seeds.

The enzyme catalyses Endohydrolysis of the N-glycosidic bond at one specific adenosine on the 28S rRNA.. In terms of biological role, inhibits protein synthesis in animal cells. Useful as immunotoxin for pharmacological applications. The polypeptide is Protein synthesis inhibitor PD-S2 (Phytolacca dioica (Bella sombra tree)).